The primary structure comprises 156 residues: Flagellar assembly factor FliW (156 aa).

Belongs to the FliW family. Interacts with translational regulator CsrA and flagellin(s).

It localises to the cytoplasm. Acts as an anti-CsrA protein, binds CsrA and prevents it from repressing translation of its target genes, one of which is flagellin. Binds to flagellin and participates in the assembly of the flagellum. In Pseudothermotoga lettingae (strain ATCC BAA-301 / DSM 14385 / NBRC 107922 / TMO) (Thermotoga lettingae), this protein is Flagellar assembly factor FliW.